We begin with the raw amino-acid sequence, 742 residues long: Synaptic vesicle glycoprotein 2A (742 aa).

An interaction with SYT1 region spans residues 1–57 (MEEGFRDRAAFIRGAKDIAKEVKKHAAKKVVKGLDRVQDEYSRRSYSRFEEEDDDDD). Residues 1 to 169 (MEEGFRDRAA…GHGRFQWTLY (169 aa)) lie on the Cytoplasmic side of the membrane. Basic and acidic residues predominate over residues 33–49 (GLDRVQDEYSRRSYSRF). A disordered region spans residues 33-144 (GLDRVQDEYS…GRGEAQRRKE (112 aa)). Ser80 and Ser81 each carry phosphoserine. At Thr84 the chain carries Phosphothreonine. The span at 122 to 137 (VRGGLSDGEGPPGGRG) shows a compositional bias: gly residues. Position 127 is a phosphoserine (Ser127). The chain crosses the membrane as a helical span at residues 170–190 (FVLGLALMADGVEVFVVGFVL). Residues 191–205 (PSAEKDMCLSDSNKG) are Extracellular-facing. Residues 206 to 226 (MLGLIVYLGMMVGAFLWGGLA) form a helical membrane-spanning segment. Topologically, residues 227–233 (DRLGRRQ) are cytoplasmic. A helical transmembrane segment spans residues 234–254 (CLLISLSVNSVFAFFSSFVQG). The Extracellular portion of the chain corresponds to 255–262 (YGTFLFCR). Residues 263–283 (LLSGVGIGGSIPIVFSYFSEF) form a helical membrane-spanning segment. At 284-294 (LAQEKRGEHLS) the chain is on the cytoplasmic side. A helical transmembrane segment spans residues 295–315 (WLCMFWMIGGVYAAAMAWAII). The Extracellular segment spans residues 316–334 (PHYGWSFQMGSAYQFHSWR). The chain crosses the membrane as a helical span at residues 335 to 355 (VFVLVCAFPSVFAIGALTTQP). The Cytoplasmic segment spans residues 356-447 (ESPRFFLENG…CFGPEYRRIT (92 aa)). The residue at position 393 (Ser393) is a Phosphoserine. Residues 448–468 (LMMMGVWFTMSFSYYGLTVWF) form a helical membrane-spanning segment. Over 469-598 (PDMIRHLQAV…GTGEGAYMVY (130 aa)) the chain is Extracellular. Tyr480 is subject to Phosphotyrosine. N-linked (GlcNAc...) asparagine glycosylation is found at Asn498, Asn548, and Asn573. A helical transmembrane segment spans residues 599–619 (FVSFLGTLAVLPGNIVSALLM). Residues 620–626 (DKIGRLR) are Cytoplasmic-facing. The chain crosses the membrane as a helical span at residues 627–647 (MLAGSSVMSCVSCFFLSFGNS). Residues 648–651 (ESAM) are Extracellular-facing. A helical transmembrane segment spans residues 652–672 (IALLCLFGGVSIASWNALDVL). Topologically, residues 673-685 (TVELYPSDKRTTA) are cytoplasmic. The chain crosses the membrane as a helical span at residues 686–708 (FGFLNALCKLAAVLGISIFTSFV). Residues 709 to 712 (GITK) lie on the Extracellular side of the membrane. A helical transmembrane segment spans residues 713-731 (AAPILFASAALALGSSLAL). The Cytoplasmic segment spans residues 732–742 (KLPETRGQVLQ).

It belongs to the major facilitator superfamily. Interacts with SYT1/synaptotagmin-1 in a calcium-dependent manner. Binds the adapter protein complex AP-2. As to quaternary structure, (Microbial infection) Interacts with C.botulinum neurotoxin type A2 (BoNT/A, botA). Interaction is improved by glycosylation of SV2. In terms of processing, phosphorylation by CK1 of the N-terminal cytoplasmic domain regulates interaction with SYT1. N-glycosylated.

It is found in the presynapse. The protein localises to the cytoplasmic vesicle. It localises to the secretory vesicle. The protein resides in the synaptic vesicle membrane. Functionally, plays a role in the control of regulated secretion in neural and endocrine cells, enhancing selectively low-frequency neurotransmission. Positively regulates vesicle fusion by maintaining the readily releasable pool of secretory vesicles. Its function is as follows. (Microbial infection) Receptor for the C.botulinum neurotoxin type A2 (BoNT/A, botA); glycosylation is not essential but enhances the interaction. Probably also serves as a receptor for the closely related C.botulinum neurotoxin type A1. This is Synaptic vesicle glycoprotein 2A (SV2A) from Homo sapiens (Human).